The chain runs to 417 residues: MTKIKNYTLNFGPQHPAAHGVLRLVLELDGEVIQRADPHIGLLHRATEKLAETRTWIQNVPYMDRLDYVSMMSNEHAYVLAIEKLLQVDVPLRAQYIRVMFDELTRLLNHLLWIGCHGLDVGAMAVFLYAFRDREDIFDMYEAVSGARMHAAYYRPGGVYRDLPDQMAQYSKSKIRSASAIKRLNENRSGTLLDFIDQFTNGFDANVDEYCNLLTDNRIWKQRLVNIGIVTPERALQLGFTGPMLRGSGIEWDLRKKQPYEVYDRLDFDIPVGVNGDSYDRYLVRMEEMRQSNRIIKQCVAWLKANSGPVMSDNHKVSPPKRVDMKTNMEELIHHFKLFTEGMHVPNGEAYSAVEHPKGEFGIYLISDGANKPYRMKIRAPGFVHLSAMDEMSRGHMLADAVTIIGTQDIVFGEIDR.

This sequence belongs to the complex I 49 kDa subunit family. NDH-1 is composed of 14 different subunits. Subunits NuoB, C, D, E, F, and G constitute the peripheral sector of the complex.

Its subcellular location is the cell membrane. It carries out the reaction a quinone + NADH + 5 H(+)(in) = a quinol + NAD(+) + 4 H(+)(out). Its function is as follows. NDH-1 shuttles electrons from NADH, via FMN and iron-sulfur (Fe-S) centers, to quinones in the respiratory chain. The immediate electron acceptor for the enzyme in this species is believed to be ubiquinone. Couples the redox reaction to proton translocation (for every two electrons transferred, four hydrogen ions are translocated across the cytoplasmic membrane), and thus conserves the redox energy in a proton gradient. This Polynucleobacter asymbioticus (strain DSM 18221 / CIP 109841 / QLW-P1DMWA-1) (Polynucleobacter necessarius subsp. asymbioticus) protein is NADH-quinone oxidoreductase subunit D.